The following is a 160-amino-acid chain: General odorant-binding protein 2 (160 aa).

The first 20 residues, 1–20 (MFSFLILVFVASVADSVIGT), serve as a signal peptide directing secretion. 3 cysteine pairs are disulfide-bonded: Cys38–Cys73, Cys69–Cys127, and Cys116–Cys136.

It belongs to the PBP/GOBP family. Homodimer. As to expression, detected in antenna (at protein level). Expressed at high levels in antenna.

Present in the aqueous fluid surrounding olfactory sensory dendrites and are thought to aid in the capture and transport of hydrophobic odorants into and through this fluid. This Bombyx mori (Silk moth) protein is General odorant-binding protein 2.